A 253-amino-acid chain; its full sequence is Indole-3-glycerol phosphate synthase (253 aa).

The protein belongs to the TrpC family.

The catalysed reaction is 1-(2-carboxyphenylamino)-1-deoxy-D-ribulose 5-phosphate + H(+) = (1S,2R)-1-C-(indol-3-yl)glycerol 3-phosphate + CO2 + H2O. Its pathway is amino-acid biosynthesis; L-tryptophan biosynthesis; L-tryptophan from chorismate: step 4/5. The sequence is that of Indole-3-glycerol phosphate synthase from Petrotoga mobilis (strain DSM 10674 / SJ95).